We begin with the raw amino-acid sequence, 165 residues long: Yapsin-5 (165 aa).

The signal sequence occupies residues 1-24 (MQLFSILSLLSSLMCSLTVLGSSA). Asn57 carries N-linked (GlcNAc...) asparagine glycosylation. The 99-residue stretch at 67–165 (YVVKMEIGTP…TRLSSMTYTY (99 aa)) folds into the Peptidase A1 domain.

This sequence belongs to the peptidase A1 family.

In Saccharomyces cerevisiae (strain ATCC 204508 / S288c) (Baker's yeast), this protein is Yapsin-5 (YPS5).